The sequence spans 436 residues: MGSIGANNAVADPTPLFSSRVQKWEPGAIRSLLPLEALPGMISLVAGKPSPETFPIAEIAISLKDTPAGTGRIVVDGDELNQALQYGLPRGNAQLIQWFESLQRSVHGLDENGGWSCCIGNGSQELIHRVIQVFTDPGDPVLLETPAYPGVAGFLRADGQELIPVYSDAQGLNPASLEQALSEWPGDSPRPKVLYTTPTGSNPTGQSCTESRKAEILRLAKRFNFIILEDDAYYYLNYGDDKQRARSYLALERDVNGESGRVVRFDSLSKIVSPGMRLGILTAQAAVVDKVVRITENINLQPSSTTQLLALSLLRHWGQAGFLKHCAEAAEVYRRRRDVFVSAAERHLQGRATWVVPTAGMFVWLELKLPPEMDSFELLKSQGMKNGVLAIPGVAFMPGNEQTCYIRVSFSLVPERDMDEACRRIAGLVDRCACHS.

Residues Arg-30, Tyr-86, Tyr-148, and Asn-202 each contribute to the substrate site. The residue at position 270 (Lys-270) is an N6-(pyridoxal phosphate)lysine. Arg-407 provides a ligand contact to substrate.

Belongs to the class-I pyridoxal-phosphate-dependent aminotransferase family. Pyridoxal 5'-phosphate is required as a cofactor.

It catalyses the reaction 3-phenylpyruvate + L-tryptophan = indole-3-pyruvate + L-phenylalanine. The protein operates within secondary metabolite biosynthesis. Aminotransferase; part of the gene cluster that mediates the biosynthesis of terrequinone A, an antitumor agent. The first step in the biosynthetic pathway for terrequinone A is formation of indole pyruvic acid (IPA) from L-tryptophan by the aminotransferase tdiD. The nonribosomal peptide synthase tdiA then immediately converts unstable IPA to didemethylasterriquinone D (DDAQ D), via condensation of 2 IPA molecules. The symmetric connectivity of the 2 IPA molecules is thought to arise by head-to-tail dual Claisen condensations facilitated by the TE domain. TdiB then catalyzes reverse prenylation by transferring dimethylallyl diphosphate to carbon atom 2' of DDAQ D, to yield asterriquinone C-1. Finally, tdiC and tdiE enzymes robustly convert asterriquinone C-1 to terrequinone A via a transformation involving regular prenylation at carbon atom 5, which requires elimination of the hydroxy group on C-5. This chain is Aminotransferase tdiD, found in Emericella nidulans (strain FGSC A4 / ATCC 38163 / CBS 112.46 / NRRL 194 / M139) (Aspergillus nidulans).